An 85-amino-acid chain; its full sequence is U4-theraphotoxin-Hhn1a (85 aa).

The signal sequence occupies residues Met1–Ala22. A propeptide spanning residues Glu23 to Arg48 is cleaved from the precursor. 3 disulfide bridges follow: Cys52–Cys66, Cys56–Cys77, and Cys71–Cys82.

Belongs to the neurotoxin 12 (Hwtx-2) family. 02 (Hwtx-2) subfamily. In terms of assembly, monomer. As to expression, expressed by the venom gland.

The protein resides in the secreted. In terms of biological role, neurotoxin active on both insects and mammals. This Cyriopagopus hainanus (Chinese bird spider) protein is U4-theraphotoxin-Hhn1a.